A 445-amino-acid chain; its full sequence is Sporulation-specific glucan 1,3-beta-glucosidase (445 aa).

Residues 1–21 form the signal peptide; sequence MVSFRGLTTLTLLFTKLVNCN. A glycan (N-linked (GlcNAc...) asparagine) is linked at Asn201. The active-site Proton donor is the Glu233. Glu335 acts as the Nucleophile in catalysis.

It belongs to the glycosyl hydrolase 5 (cellulase A) family.

It is found in the secreted. The enzyme catalyses Successive hydrolysis of beta-D-glucose units from the non-reducing ends of (1-&gt;3)-beta-D-glucans, releasing alpha-glucose.. Its function is as follows. Probably involved in the processes of spore formation and contributes to ascospore thermoresistance by participating in the morphogenesis of ascospore walls. The enzyme may do this by modifying glucan linkages in the developing ascospore wall, thus strengthening it or lending it plasticity. The chain is Sporulation-specific glucan 1,3-beta-glucosidase (SPR1) from Saccharomyces cerevisiae (strain ATCC 204508 / S288c) (Baker's yeast).